The primary structure comprises 291 residues: Inactive dihydropteroate synthase 2 (291 aa).

The region spanning 15-272 (QLIMAIVNRT…EVVATRRVLE (258 aa)) is the Pterin-binding domain.

The protein belongs to the DHPS family. As to quaternary structure, homodimer.

Its function is as follows. Has very low affinity for the DHPS substrate 6-hydroxymethyl-7,8-dihydropterin-pyrophosphate, but can bind the inhibitor dapsone. Seems to lack dihydropteroate synthase activity, and does probably not function in folate metabolism. This Mycobacterium leprae (strain TN) protein is Inactive dihydropteroate synthase 2 (folP2).